Here is a 433-residue protein sequence, read N- to C-terminus: Bifunctional protein GlmU (433 aa).

A pyrophosphorylase region spans residues 1 to 226; the sequence is MLSVIILAAG…EECFLGVNSQ (226 aa). Residues 7-10, Lys-21, and 80-81 each bind UDP-N-acetyl-alpha-D-glucosamine; these read LAAG and GT. Asp-106 contributes to the Mg(2+) binding site. UDP-N-acetyl-alpha-D-glucosamine is bound by residues Gly-138, Glu-152, Asn-167, and Asn-224. Residue Asn-224 participates in Mg(2+) binding. A linker region spans residues 227–247; sequence TERAKAEEIMLERLRKNAMDL. The interval 248–433 is N-acetyltransferase; sequence GVVMQLPNSI…NGYFKFFKKP (186 aa). Residues Arg-311 and Lys-328 each contribute to the UDP-N-acetyl-alpha-D-glucosamine site. The active-site Proton acceptor is His-339. UDP-N-acetyl-alpha-D-glucosamine is bound by residues Tyr-342 and Asn-353. Residues Ala-356, 362–363, Ser-381, Ser-399, and Arg-416 each bind acetyl-CoA; that span reads NY.

It in the N-terminal section; belongs to the N-acetylglucosamine-1-phosphate uridyltransferase family. This sequence in the C-terminal section; belongs to the transferase hexapeptide repeat family. Homotrimer. The cofactor is Mg(2+).

The protein resides in the cytoplasm. The catalysed reaction is alpha-D-glucosamine 1-phosphate + acetyl-CoA = N-acetyl-alpha-D-glucosamine 1-phosphate + CoA + H(+). It catalyses the reaction N-acetyl-alpha-D-glucosamine 1-phosphate + UTP + H(+) = UDP-N-acetyl-alpha-D-glucosamine + diphosphate. It participates in nucleotide-sugar biosynthesis; UDP-N-acetyl-alpha-D-glucosamine biosynthesis; N-acetyl-alpha-D-glucosamine 1-phosphate from alpha-D-glucosamine 6-phosphate (route II): step 2/2. Its pathway is nucleotide-sugar biosynthesis; UDP-N-acetyl-alpha-D-glucosamine biosynthesis; UDP-N-acetyl-alpha-D-glucosamine from N-acetyl-alpha-D-glucosamine 1-phosphate: step 1/1. The protein operates within bacterial outer membrane biogenesis; LPS lipid A biosynthesis. Catalyzes the last two sequential reactions in the de novo biosynthetic pathway for UDP-N-acetylglucosamine (UDP-GlcNAc). The C-terminal domain catalyzes the transfer of acetyl group from acetyl coenzyme A to glucosamine-1-phosphate (GlcN-1-P) to produce N-acetylglucosamine-1-phosphate (GlcNAc-1-P), which is converted into UDP-GlcNAc by the transfer of uridine 5-monophosphate (from uridine 5-triphosphate), a reaction catalyzed by the N-terminal domain. The protein is Bifunctional protein GlmU of Helicobacter pylori (strain ATCC 700392 / 26695) (Campylobacter pylori).